We begin with the raw amino-acid sequence, 444 residues long: Tol-Pal system protein TolB (444 aa).

Positions 1–19 are cleaved as a signal peptide; it reads MRNIIYFILSLLFSVTSYA.

This sequence belongs to the TolB family. In terms of assembly, the Tol-Pal system is composed of five core proteins: the inner membrane proteins TolA, TolQ and TolR, the periplasmic protein TolB and the outer membrane protein Pal. They form a network linking the inner and outer membranes and the peptidoglycan layer.

The protein resides in the periplasm. Its function is as follows. Part of the Tol-Pal system, which plays a role in outer membrane invagination during cell division and is important for maintaining outer membrane integrity. The sequence is that of Tol-Pal system protein TolB from Rickettsia africae (strain ESF-5).